Reading from the N-terminus, the 185-residue chain is Ribosome-recycling factor (185 aa).

It belongs to the RRF family.

The protein resides in the cytoplasm. In terms of biological role, responsible for the release of ribosomes from messenger RNA at the termination of protein biosynthesis. May increase the efficiency of translation by recycling ribosomes from one round of translation to another. This is Ribosome-recycling factor from Xylella fastidiosa (strain 9a5c).